The following is a 35-amino-acid chain: Photosystem II reaction center protein M (35 aa).

The helical transmembrane segment at 5-25 (ILAFVATALFILIPTAFLLIL) threads the bilayer.

This sequence belongs to the PsbM family. In terms of assembly, PSII is composed of 1 copy each of membrane proteins PsbA, PsbB, PsbC, PsbD, PsbE, PsbF, PsbH, PsbI, PsbJ, PsbK, PsbL, PsbM, PsbT, PsbX, PsbY, PsbZ, Psb30/Ycf12, at least 3 peripheral proteins of the oxygen-evolving complex and a large number of cofactors. It forms dimeric complexes.

Its subcellular location is the plastid. It localises to the chloroplast thylakoid membrane. Its function is as follows. One of the components of the core complex of photosystem II (PSII). PSII is a light-driven water:plastoquinone oxidoreductase that uses light energy to abstract electrons from H(2)O, generating O(2) and a proton gradient subsequently used for ATP formation. It consists of a core antenna complex that captures photons, and an electron transfer chain that converts photonic excitation into a charge separation. This subunit is found at the monomer-monomer interface. In Adiantum capillus-veneris (Maidenhair fern), this protein is Photosystem II reaction center protein M.